We begin with the raw amino-acid sequence, 696 residues long: Elongation factor G (696 aa).

The tr-type G domain occupies 8-288; sequence EDYRNFGIMA…AVVDFLPSPI (281 aa). GTP is bound by residues 17-24, 86-90, and 140-143; these read AHIDAGKT, DTPGH, and NKMD.

The protein belongs to the TRAFAC class translation factor GTPase superfamily. Classic translation factor GTPase family. EF-G/EF-2 subfamily.

It localises to the cytoplasm. In terms of biological role, catalyzes the GTP-dependent ribosomal translocation step during translation elongation. During this step, the ribosome changes from the pre-translocational (PRE) to the post-translocational (POST) state as the newly formed A-site-bound peptidyl-tRNA and P-site-bound deacylated tRNA move to the P and E sites, respectively. Catalyzes the coordinated movement of the two tRNA molecules, the mRNA and conformational changes in the ribosome. The polypeptide is Elongation factor G (Chelativorans sp. (strain BNC1)).